A 505-amino-acid polypeptide reads, in one-letter code: MSEQHAQGADAVVDLNNELKTRREKLANLREQGIAFPNDFRRDHTSDQLHAEFDGKENEELEALNIEVAVAGRMMTRRIMGKASFVTLQDVGGRIQLYVARDDLPEGVYNEQFKKWDLGDILGAKGKLFKTKTGELSIHCTELRLLTKALRPLPDKFHGLQDQEARYRQRYLDLISNDESRNTFKVRSQILSGIRQFMVNRGFMEVETPMMQVIPGGAAARPFITHHNALDLDMYLRIAPELYLKRLVVGGFERVFEINRNFRNEGISVRHNPEFTMMELYMAYADYKDLIELTESLFRTLAQDILGKTEVTYGDVTLDFGKPFEKLTMREAIKKYRPETDMADLDNFDSAKAIAESIGIHVEKSWGLGRIVTEIFEEVAEAHLIQPTFITEYPAEVSPLARRNDVNPEITDRFEFFIGGREIGNGFSELNDAEDQAQRFLDQVAAKDAGDDEAMFYDEDYVTALEHGLPPTAGLGIGIDRMVMLFTNSHTIRDVILFPAMRPVK.

E415 and E422 together coordinate Mg(2+).

It belongs to the class-II aminoacyl-tRNA synthetase family. Homodimer. Requires Mg(2+) as cofactor.

Its subcellular location is the cytoplasm. It carries out the reaction tRNA(Lys) + L-lysine + ATP = L-lysyl-tRNA(Lys) + AMP + diphosphate. The protein is Lysine--tRNA ligase (lysS) of Escherichia coli (strain K12).